Here is a 206-residue protein sequence, read N- to C-terminus: MPSLLITALFLNVIIYVINTVGAATVDGLLWLLYIQLPTGTSQIAREQRHMKREVVQLKHEMSSTSSQDEFAKWAKLRRRHDKALEAYEAKNNELTQSKSTFDITIKIARWAATSGLMLFLQFWYSKTPIFTLPPGWIPWQVQWVLSFPRAPMGTVSIQIWSGACATVVALVGDAMKASLAYVSKPKIDRIKLGATMEGKEGKKRQ.

At 1-4 (MPSL) the chain is on the lumenal side. A helical transmembrane segment spans residues 5–24 (LITALFLNVIIYVINTVGAA). Over 25–110 (TVDGLLWLLY…TFDITIKIAR (86 aa)) the chain is Cytoplasmic. A coiled-coil region spans residues 75–100 (AKLRRRHDKALEAYEAKNNELTQSKS). Residues 111–131 (WAATSGLMLFLQFWYSKTPIF) form a helical membrane-spanning segment. Over 132-155 (TLPPGWIPWQVQWVLSFPRAPMGT) the chain is Lumenal. The helical transmembrane segment at 156–172 (VSIQIWSGACATVVALV) threads the bilayer. The Cytoplasmic portion of the chain corresponds to 173-206 (GDAMKASLAYVSKPKIDRIKLGATMEGKEGKKRQ).

The protein belongs to the WRB/GET1 family. Interacts with GET3.

It is found in the endoplasmic reticulum membrane. Functionally, required for the post-translational delivery of tail-anchored (TA) proteins to the endoplasmic reticulum. Acts as a membrane receptor for soluble GET3, which recognizes and selectively binds the transmembrane domain of TA proteins in the cytosol. This is Protein GET1 from Ajellomyces capsulatus (strain H143) (Darling's disease fungus).